The chain runs to 376 residues: DNA-directed RNA polymerase subunit alpha (376 aa).

Positions 1–259 (MSDNSQNLLY…KHFSIFEKMD (259 aa)) are alpha N-terminal domain (alpha-NTD). An alpha C-terminal domain (alpha-CTD) region spans residues 276-376 (KDDILHKLVL…EKIRSKNVKG (101 aa)).

It belongs to the RNA polymerase alpha chain family. In terms of assembly, homodimer. The RNAP catalytic core consists of 2 alpha, 1 beta, 1 beta' and 1 omega subunit. When a sigma factor is associated with the core the holoenzyme is formed, which can initiate transcription.

It carries out the reaction RNA(n) + a ribonucleoside 5'-triphosphate = RNA(n+1) + diphosphate. In terms of biological role, DNA-dependent RNA polymerase catalyzes the transcription of DNA into RNA using the four ribonucleoside triphosphates as substrates. The sequence is that of DNA-directed RNA polymerase subunit alpha from Chlamydia felis (strain Fe/C-56) (Chlamydophila felis).